A 411-amino-acid chain; its full sequence is S-inosyl-L-homocysteine hydrolase (411 aa).

Residues aspartate 121 and glutamate 146 each coordinate substrate. 147–149 (TTT) provides a ligand contact to NAD(+). The substrate site is built by lysine 176 and aspartate 180. NAD(+) contacts are provided by residues asparagine 181, 210–215 (GYGWCG), glutamate 233, asparagine 268, 289–291 (SGH), and asparagine 335.

It belongs to the adenosylhomocysteinase family. The cofactor is NAD(+).

The protein resides in the cytoplasm. The enzyme catalyses S-inosyl-L-homocysteine + H2O = L-homocysteine + inosine. Its pathway is amino-acid biosynthesis; S-adenosyl-L-methionine biosynthesis. In terms of biological role, catalyzes the hydrolysis of S-inosyl-L-homocysteine (SIH) to L-homocysteine (Hcy) and inosine. Likely functions in a S-adenosyl-L-methionine (SAM) recycling pathway from S-adenosyl-L-homocysteine (SAH) produced from SAM-dependent methylation reactions. Can also catalyze the reverse reaction in vitro, i.e. the synthesis of SIH from Hcy and inosine. The chain is S-inosyl-L-homocysteine hydrolase from Methanosarcina acetivorans (strain ATCC 35395 / DSM 2834 / JCM 12185 / C2A).